Reading from the N-terminus, the 299-residue chain is Nucleotide-binding protein AFE_3021 (299 aa).

11–18 (GLSGSGKS) contributes to the ATP binding site. 62-65 (DVRN) serves as a coordination point for GTP.

Belongs to the RapZ-like family.

Displays ATPase and GTPase activities. This Acidithiobacillus ferrooxidans (strain ATCC 23270 / DSM 14882 / CIP 104768 / NCIMB 8455) (Ferrobacillus ferrooxidans (strain ATCC 23270)) protein is Nucleotide-binding protein AFE_3021.